A 150-amino-acid chain; its full sequence is Transcriptional regulator MraZ (150 aa).

2 SpoVT-AbrB domains span residues 5–52 (VTHL…PLPD) and 81–124 (AHDL…DAEA).

The protein belongs to the MraZ family. As to quaternary structure, forms oligomers.

It localises to the cytoplasm. Its subcellular location is the nucleoid. In Alkalilimnicola ehrlichii (strain ATCC BAA-1101 / DSM 17681 / MLHE-1), this protein is Transcriptional regulator MraZ.